Here is an 88-residue protein sequence, read N- to C-terminus: UPF0297 protein BcerKBAB4_4234 (88 aa).

This sequence belongs to the UPF0297 family.

This is UPF0297 protein BcerKBAB4_4234 from Bacillus mycoides (strain KBAB4) (Bacillus weihenstephanensis).